We begin with the raw amino-acid sequence, 144 residues long: Aklanonic acid methyl ester cyclase AcmA (144 aa).

Substrate contacts are provided by Asn51 and Gln105.

This sequence belongs to the polyketide cyclase DnrD family. In terms of assembly, homotetramer.

It carries out the reaction methyl aklanonate = aklaviketone. It participates in antibiotic biosynthesis; daunorubicin biosynthesis. The protein operates within antibiotic biosynthesis; carminomycin biosynthesis. Its pathway is antibiotic biosynthesis; rhodomycin biosynthesis. It functions in the pathway antibiotic biosynthesis; aclacinomycin biosynthesis. Involved in the biosynthesis of aklavinone which is an important precursor common to the formation of the clinically significant anthracyclines such as carminomycin, daunorubicin (daunomycin), rhodomycin, aclacinomycin T (aklavin) and aclacinomycin A (aclarubicin). These compounds are aromatic polyketide antibiotics that exhibit high cytotoxicity and are widely applied in the chemotherapy of a variety of cancers. Catalyzes the cyclization of aklanonic acid methyl ester to yield aklaviketone. It is also able to use nogalonic acid methyl ester as substrate, but produces exclusively auraviketone with C9-R stereochemistry. The chain is Aklanonic acid methyl ester cyclase AcmA (acma) from Streptomyces galilaeus.